We begin with the raw amino-acid sequence, 258 residues long: Acyl-[acyl-carrier-protein]--UDP-N-acetylglucosamine O-acyltransferase (258 aa).

Belongs to the transferase hexapeptide repeat family. LpxA subfamily. Homotrimer.

Its subcellular location is the cytoplasm. The catalysed reaction is a (3R)-hydroxyacyl-[ACP] + UDP-N-acetyl-alpha-D-glucosamine = a UDP-3-O-[(3R)-3-hydroxyacyl]-N-acetyl-alpha-D-glucosamine + holo-[ACP]. The protein operates within glycolipid biosynthesis; lipid IV(A) biosynthesis; lipid IV(A) from (3R)-3-hydroxytetradecanoyl-[acyl-carrier-protein] and UDP-N-acetyl-alpha-D-glucosamine: step 1/6. Involved in the biosynthesis of lipid A, a phosphorylated glycolipid that anchors the lipopolysaccharide to the outer membrane of the cell. In Syntrophobacter fumaroxidans (strain DSM 10017 / MPOB), this protein is Acyl-[acyl-carrier-protein]--UDP-N-acetylglucosamine O-acyltransferase.